Consider the following 121-residue polypeptide: Cytochrome B5-like protein (121 aa).

Residues 1–21 (MIAVIGLLLGFLVSALFLIQG) traverse the membrane as a helical segment. The disordered stretch occupies residues 24-49 (RRTNDNQEKKRSSSEPVEDVVRPKSY). The segment covering 26 to 36 (TNDNQEKKRSS) has biased composition (basic and acidic residues). The Cytochrome b5 heme-binding domain occupies 46 to 121 (PKSYSKSEVA…IEDFYIGELH (76 aa)). 2 residues coordinate heme: H81 and H104.

This sequence belongs to the cytochrome b5 family.

The protein resides in the membrane. The protein is Cytochrome B5-like protein of Arabidopsis thaliana (Mouse-ear cress).